The chain runs to 514 residues: Beta-secretase 2 (514 aa).

The first 20 residues, 1–20, serve as a signal peptide directing secretion; sequence MGALLRALLLPLLAQWLLRA. Positions 21–62 are excised as a propeptide; the sequence is VPVLAPAPFTLPLQVAGAANHRASTVPGLGTPELPRADGLAL. Topologically, residues 21–469 are extracellular; sequence VPVLAPAPFT…NEPILWIVSY (449 aa). Positions 88-425 constitute a Peptidase A1 domain; it reads YYLEMLIGTP…DRAQRRVGFA (338 aa). The active site involves aspartate 106. A glycan (N-linked (GlcNAc...) asparagine) is linked at asparagine 166. Cystine bridges form between cysteine 229/cysteine 429, cysteine 288/cysteine 453, and cysteine 340/cysteine 389. Residue aspartate 299 is part of the active site. N-linked (GlcNAc...) asparagine glycosylation is present at asparagine 362. The helical transmembrane segment at 470–490 threads the bilayer; sequence ALMSVCGAILLVLILLLLFPL. The Cytoplasmic portion of the chain corresponds to 491-514; sequence HCRHAPRDPEVVNDESSLVRHRWK.

It belongs to the peptidase A1 family. In terms of assembly, monomer. Interacts with RTN3 and RTN4. Undergoes autoproteolytic cleavage. In terms of processing, glycosylated.

Its subcellular location is the cell membrane. The protein localises to the golgi apparatus. The protein resides in the endoplasmic reticulum. It is found in the endosome. It localises to the melanosome. The enzyme catalyses Broad endopeptidase specificity. Cleaves Glu-Val-Asn-Leu-|-Asp-Ala-Glu-Phe in the Swedish variant of Alzheimer's amyloid precursor protein.. In terms of biological role, responsible for the proteolytic processing of the amyloid precursor protein (APP). Cleaves APP, between residues 690 and 691, leading to the generation and extracellular release of beta-cleaved soluble APP, and a corresponding cell-associated C-terminal fragment which is later released by gamma-secretase. It has also been shown that it can cleave APP between residues 671 and 672. Involved in the proteolytic shedding of PMEL at early stages of melanosome biogenesis. Cleaves PMEL within the M-beta fragment to release the amyloidogenic PMEL luminal fragment containing M-alpha and a small portion of M-beta N-terminus. This is a prerequisite step for subsequent processing and assembly of PMEL fibrils into amyloid sheets. Responsible also for the proteolytic processing of CLTRN in pancreatic beta cells. The polypeptide is Beta-secretase 2 (Bace2) (Rattus norvegicus (Rat)).